The following is a 142-amino-acid chain: Large ribosomal subunit protein uL13 (142 aa).

It belongs to the universal ribosomal protein uL13 family. In terms of assembly, part of the 50S ribosomal subunit.

This protein is one of the early assembly proteins of the 50S ribosomal subunit, although it is not seen to bind rRNA by itself. It is important during the early stages of 50S assembly. This chain is Large ribosomal subunit protein uL13, found in Bordetella bronchiseptica (strain ATCC BAA-588 / NCTC 13252 / RB50) (Alcaligenes bronchisepticus).